The following is a 546-amino-acid chain: Chaperonin GroEL (546 aa).

Residues 30-33 (TLGP), 87-91 (DGTTT), Gly414, 477-479 (NAL), and Asp493 contribute to the ATP site.

The protein belongs to the chaperonin (HSP60) family. As to quaternary structure, forms a cylinder of 14 subunits composed of two heptameric rings stacked back-to-back. Interacts with the co-chaperonin GroES.

It localises to the cytoplasm. The enzyme catalyses ATP + H2O + a folded polypeptide = ADP + phosphate + an unfolded polypeptide.. Its function is as follows. Together with its co-chaperonin GroES, plays an essential role in assisting protein folding. The GroEL-GroES system forms a nano-cage that allows encapsulation of the non-native substrate proteins and provides a physical environment optimized to promote and accelerate protein folding. The polypeptide is Chaperonin GroEL (Syntrophomonas wolfei subsp. wolfei (strain DSM 2245B / Goettingen)).